The primary structure comprises 313 residues: tRNA dimethylallyltransferase (313 aa).

11-18 is a binding site for ATP; the sequence is GPTASGKT. 13–18 serves as a coordination point for substrate; it reads TASGKT. Interaction with substrate tRNA stretches follow at residues 36-39 and 160-164; these read DSRQ and QRLIR.

It belongs to the IPP transferase family. Monomer. Requires Mg(2+) as cofactor.

The catalysed reaction is adenosine(37) in tRNA + dimethylallyl diphosphate = N(6)-dimethylallyladenosine(37) in tRNA + diphosphate. Catalyzes the transfer of a dimethylallyl group onto the adenine at position 37 in tRNAs that read codons beginning with uridine, leading to the formation of N6-(dimethylallyl)adenosine (i(6)A). The sequence is that of tRNA dimethylallyltransferase from Chlorobaculum parvum (strain DSM 263 / NCIMB 8327) (Chlorobium vibrioforme subsp. thiosulfatophilum).